An 837-amino-acid polypeptide reads, in one-letter code: Cap-specific mRNA (nucleoside-2'-O-)-methyltransferase 1 (837 aa).

Residues 1–66 (MKRRTDPECT…EGKQPCSDDF (66 aa)) form a disordered region. The short motif at 2–18 (KRRTDPECTAPLKKQKR) is the Bipartite nuclear localization signal element. A phosphoserine mark is found at serine 27, serine 30, and serine 52. Positions 56 to 66 (TEGKQPCSDDF) are enriched in basic and acidic residues. A G-patch domain is found at 86-132 (YNSVSQRLMAKMGFREGEGLGKYSQGRKDIVETSNQKGRRGLGLTLQ). Serine 90 carries the phosphoserine modification. Lysine 107 bears the N6-acetyllysine mark. Residues 202–206 (KSVFD) and arginine 217 each bind substrate. Residues 230–449 (FFLNRAAMKM…ERYVVCKGLK (220 aa)) form the RrmJ-type SAM-dependent 2'-O-MTase domain. Asparagine 233 provides a ligand contact to S-adenosyl-L-methionine. Lysine 238 is a catalytic residue. S-adenosyl-L-methionine-binding positions include 276–282 (CAGPGGF) and 334–335 (DI). The active site involves aspartate 363. A substrate-binding site is contributed by 373-375 (NLQ). The active-site Proton acceptor is the lysine 403. Asparagine 438 provides a ligand contact to substrate. An interaction with POLR2A region spans residues 726–834 (SGGTPKLSYT…VLSFIQSHNP (109 aa)). Residues 751–785 (RTVNEPWTMGFSKSNNRKFFYNKKTQKSVYALPTE) enclose the WW domain.

As to quaternary structure, interacts with POLR2A (via C-terminus).

It localises to the nucleus. It catalyses the reaction a 5'-end (N(7)-methyl 5'-triphosphoguanosine)-ribonucleoside in mRNA + S-adenosyl-L-methionine = a 5'-end (N(7)-methyl 5'-triphosphoguanosine)-(2'-O-methyl-ribonucleoside) in mRNA + S-adenosyl-L-homocysteine + H(+). In terms of biological role, S-adenosyl-L-methionine-dependent methyltransferase that mediates mRNA cap1 2'-O-ribose methylation to the 5'-cap structure of mRNAs. Methylates the ribose of the first nucleotide of a m(7)GpppG-capped mRNA and small nuclear RNA (snRNA) to produce m(7)GpppRm (cap1). Displays a preference for cap0 transcripts. Cap1 modification is linked to higher levels of translation. May be involved in the interferon response pathway. In Mus musculus (Mouse), this protein is Cap-specific mRNA (nucleoside-2'-O-)-methyltransferase 1 (Cmtr1).